The chain runs to 618 residues: DNA mismatch repair protein MutL (618 aa).

Over residues 366–381 (AEPTAAREPATPRYSG) the composition is skewed to low complexity. Residues 366–403 (AEPTAAREPATPRYSGGASGGNGGRQSAGGWPHAQPGY) form a disordered region. Gly residues predominate over residues 382 to 392 (GASGGNGGRQS).

Belongs to the DNA mismatch repair MutL/HexB family.

This protein is involved in the repair of mismatches in DNA. It is required for dam-dependent methyl-directed DNA mismatch repair. May act as a 'molecular matchmaker', a protein that promotes the formation of a stable complex between two or more DNA-binding proteins in an ATP-dependent manner without itself being part of a final effector complex. This chain is DNA mismatch repair protein MutL, found in Salmonella schwarzengrund (strain CVM19633).